The primary structure comprises 256 residues: Thiazole synthase (256 aa).

Lys95 serves as the catalytic Schiff-base intermediate with DXP. 1-deoxy-D-xylulose 5-phosphate-binding positions include Gly156, 182–183, and 204–205; these read AG and NT.

The protein belongs to the ThiG family. Homotetramer. Forms heterodimers with either ThiH or ThiS.

Its subcellular location is the cytoplasm. It carries out the reaction [ThiS sulfur-carrier protein]-C-terminal-Gly-aminoethanethioate + 2-iminoacetate + 1-deoxy-D-xylulose 5-phosphate = [ThiS sulfur-carrier protein]-C-terminal Gly-Gly + 2-[(2R,5Z)-2-carboxy-4-methylthiazol-5(2H)-ylidene]ethyl phosphate + 2 H2O + H(+). It participates in cofactor biosynthesis; thiamine diphosphate biosynthesis. Functionally, catalyzes the rearrangement of 1-deoxy-D-xylulose 5-phosphate (DXP) to produce the thiazole phosphate moiety of thiamine. Sulfur is provided by the thiocarboxylate moiety of the carrier protein ThiS. In vitro, sulfur can be provided by H(2)S. This chain is Thiazole synthase, found in Salmonella paratyphi B (strain ATCC BAA-1250 / SPB7).